Reading from the N-terminus, the 357-residue chain is MGRFDDAGAQDAEPDDRDVSPALTVGEGDIDASLRPRSLGEFIGQPRVREQLQLVLEGAKNRGGTPDHILLSGPPGLGKTSLAMIIAAELSSSLRVTSGPALERAGDLAAMLSNLVEGDVLFIDEIHRIARPAEEMLYLAMEDFRVDVVVGKGPGATSIPLEVAPFTLVGATTRSGALTGPLRDRFGFTAHMDFYEPAELERVLARSAGILGIHLGTEAGAEIARRSRGTPRIANRLLRRVRDYAEVRADGVITRDIAKAALEVYDVDELGLDRLDRAVLSALIRSFGGGPVGVSTLAVAVGEEPTTVEEVCEPFLVRAGMIARTPRGRVATASAWTHLGLTPPSGITGLGQTGLFD.

Residues 1 to 27 (MGRFDDAGAQDAEPDDRDVSPALTVGE) are disordered. The segment at 1-195 (MGRFDDAGAQ…FGFTAHMDFY (195 aa)) is large ATPase domain (RuvB-L). ATP is bound by residues L34, R35, G76, K79, T80, S81, 142 to 144 (EDF), R185, Y195, and R232. Residue T80 participates in Mg(2+) binding. Positions 196-266 (EPAELERVLA…IAKAALEVYD (71 aa)) are small ATPAse domain (RuvB-S). The head domain (RuvB-H) stretch occupies residues 269–357 (ELGLDRLDRA…TGLGQTGLFD (89 aa)). The DNA site is built by R324 and R329.

This sequence belongs to the RuvB family. As to quaternary structure, homohexamer. Forms an RuvA(8)-RuvB(12)-Holliday junction (HJ) complex. HJ DNA is sandwiched between 2 RuvA tetramers; dsDNA enters through RuvA and exits via RuvB. An RuvB hexamer assembles on each DNA strand where it exits the tetramer. Each RuvB hexamer is contacted by two RuvA subunits (via domain III) on 2 adjacent RuvB subunits; this complex drives branch migration. In the full resolvosome a probable DNA-RuvA(4)-RuvB(12)-RuvC(2) complex forms which resolves the HJ.

It localises to the cytoplasm. It catalyses the reaction ATP + H2O = ADP + phosphate + H(+). Its function is as follows. The RuvA-RuvB-RuvC complex processes Holliday junction (HJ) DNA during genetic recombination and DNA repair, while the RuvA-RuvB complex plays an important role in the rescue of blocked DNA replication forks via replication fork reversal (RFR). RuvA specifically binds to HJ cruciform DNA, conferring on it an open structure. The RuvB hexamer acts as an ATP-dependent pump, pulling dsDNA into and through the RuvAB complex. RuvB forms 2 homohexamers on either side of HJ DNA bound by 1 or 2 RuvA tetramers; 4 subunits per hexamer contact DNA at a time. Coordinated motions by a converter formed by DNA-disengaged RuvB subunits stimulates ATP hydrolysis and nucleotide exchange. Immobilization of the converter enables RuvB to convert the ATP-contained energy into a lever motion, pulling 2 nucleotides of DNA out of the RuvA tetramer per ATP hydrolyzed, thus driving DNA branch migration. The RuvB motors rotate together with the DNA substrate, which together with the progressing nucleotide cycle form the mechanistic basis for DNA recombination by continuous HJ branch migration. Branch migration allows RuvC to scan DNA until it finds its consensus sequence, where it cleaves and resolves cruciform DNA. This is Holliday junction branch migration complex subunit RuvB from Mycobacterium sp. (strain JLS).